A 122-amino-acid chain; its full sequence is Small ribosomal subunit protein uS13 (122 aa).

The interval 94 to 122 is disordered; the sequence is KQLPVRGQRTHTNARTRKGKAKPIAGKKK.

The protein belongs to the universal ribosomal protein uS13 family. Part of the 30S ribosomal subunit. Forms a loose heterodimer with protein S19. Forms two bridges to the 50S subunit in the 70S ribosome.

Its function is as follows. Located at the top of the head of the 30S subunit, it contacts several helices of the 16S rRNA. In the 70S ribosome it contacts the 23S rRNA (bridge B1a) and protein L5 of the 50S subunit (bridge B1b), connecting the 2 subunits; these bridges are implicated in subunit movement. Contacts the tRNAs in the A and P-sites. The chain is Small ribosomal subunit protein uS13 from Methylorubrum populi (strain ATCC BAA-705 / NCIMB 13946 / BJ001) (Methylobacterium populi).